A 334-amino-acid chain; its full sequence is Holliday junction branch migration complex subunit RuvB (334 aa).

The segment at 4–184 (EDRLISGTQK…FGIVQRLEYY (181 aa)) is large ATPase domain (RuvB-L). Residues Ile-23, Arg-24, Gly-65, Lys-68, Thr-69, Thr-70, 131–133 (EDY), Arg-174, Tyr-184, and Arg-221 contribute to the ATP site. Thr-69 contributes to the Mg(2+) binding site. The interval 185–255 (DLKSLTRIVL…VAKLALDMLE (71 aa)) is small ATPAse domain (RuvB-S). Residues 258 to 334 (NEGFDYMDRK…YLHFGFDKPQ (77 aa)) are head domain (RuvB-H). Positions 313 and 318 each coordinate DNA.

The protein belongs to the RuvB family. As to quaternary structure, homohexamer. Forms an RuvA(8)-RuvB(12)-Holliday junction (HJ) complex. HJ DNA is sandwiched between 2 RuvA tetramers; dsDNA enters through RuvA and exits via RuvB. An RuvB hexamer assembles on each DNA strand where it exits the tetramer. Each RuvB hexamer is contacted by two RuvA subunits (via domain III) on 2 adjacent RuvB subunits; this complex drives branch migration. In the full resolvosome a probable DNA-RuvA(4)-RuvB(12)-RuvC(2) complex forms which resolves the HJ.

It is found in the cytoplasm. The enzyme catalyses ATP + H2O = ADP + phosphate + H(+). The RuvA-RuvB-RuvC complex processes Holliday junction (HJ) DNA during genetic recombination and DNA repair, while the RuvA-RuvB complex plays an important role in the rescue of blocked DNA replication forks via replication fork reversal (RFR). RuvA specifically binds to HJ cruciform DNA, conferring on it an open structure. The RuvB hexamer acts as an ATP-dependent pump, pulling dsDNA into and through the RuvAB complex. RuvB forms 2 homohexamers on either side of HJ DNA bound by 1 or 2 RuvA tetramers; 4 subunits per hexamer contact DNA at a time. Coordinated motions by a converter formed by DNA-disengaged RuvB subunits stimulates ATP hydrolysis and nucleotide exchange. Immobilization of the converter enables RuvB to convert the ATP-contained energy into a lever motion, pulling 2 nucleotides of DNA out of the RuvA tetramer per ATP hydrolyzed, thus driving DNA branch migration. The RuvB motors rotate together with the DNA substrate, which together with the progressing nucleotide cycle form the mechanistic basis for DNA recombination by continuous HJ branch migration. Branch migration allows RuvC to scan DNA until it finds its consensus sequence, where it cleaves and resolves cruciform DNA. The chain is Holliday junction branch migration complex subunit RuvB from Psychromonas ingrahamii (strain DSM 17664 / CCUG 51855 / 37).